Reading from the N-terminus, the 331-residue chain is Pyruvate dehydrogenase E1 component subunit beta (331 aa).

Glu-60 is a binding site for thiamine diphosphate. Positions 113, 161, 162, 164, and 166 each coordinate K(+).

Heterodimer of an alpha and a beta chain. It depends on thiamine diphosphate as a cofactor.

Its subcellular location is the plastid. The protein localises to the chloroplast. It carries out the reaction N(6)-[(R)-lipoyl]-L-lysyl-[protein] + pyruvate + H(+) = N(6)-[(R)-S(8)-acetyldihydrolipoyl]-L-lysyl-[protein] + CO2. The pyruvate dehydrogenase complex catalyzes the overall conversion of pyruvate to acetyl-CoA and CO(2). It contains multiple copies of three enzymatic components: pyruvate dehydrogenase (E1), dihydrolipoamide acetyltransferase (E2) and lipoamide dehydrogenase (E3). This is Pyruvate dehydrogenase E1 component subunit beta (pdhB) from Porphyra purpurea (Red seaweed).